The chain runs to 473 residues: Photosystem II CP43 reaction center protein (473 aa).

A propeptide spanning residues 1-14 (MKILYSPRRFYPVE) is cleaved from the precursor. T15 carries the post-translational modification N-acetylthreonine. Residue T15 is modified to Phosphothreonine. 5 helical membrane passes run 69-93 (LFEV…PHLA), 134-155 (LIGP…KDKN), 178-200 (KALY…REIT), 255-275 (KPFA…LSYS), and 291-312 (WFNN…ASQA). E367 is a binding site for [CaMn4O5] cluster. Residues 447–471 (RARAAAAGFEKGIDRDTEPVLSMTP) traverse the membrane as a helical segment.

Belongs to the PsbB/PsbC family. PsbC subfamily. As to quaternary structure, PSII is composed of 1 copy each of membrane proteins PsbA, PsbB, PsbC, PsbD, PsbE, PsbF, PsbH, PsbI, PsbJ, PsbK, PsbL, PsbM, PsbT, PsbX, PsbY, PsbZ, Psb30/Ycf12, at least 3 peripheral proteins of the oxygen-evolving complex and a large number of cofactors. It forms dimeric complexes. The cofactor is Binds multiple chlorophylls and provides some of the ligands for the Ca-4Mn-5O cluster of the oxygen-evolving complex. It may also provide a ligand for a Cl- that is required for oxygen evolution. PSII binds additional chlorophylls, carotenoids and specific lipids..

It is found in the plastid. It localises to the chloroplast thylakoid membrane. In terms of biological role, one of the components of the core complex of photosystem II (PSII). It binds chlorophyll and helps catalyze the primary light-induced photochemical processes of PSII. PSII is a light-driven water:plastoquinone oxidoreductase, using light energy to abstract electrons from H(2)O, generating O(2) and a proton gradient subsequently used for ATP formation. The sequence is that of Photosystem II CP43 reaction center protein from Adiantum capillus-veneris (Maidenhair fern).